A 278-amino-acid chain; its full sequence is Bifunctional protein FolD (278 aa).

Residues 162–164 and Ile228 each bind NADP(+); that span reads GAG.

The protein belongs to the tetrahydrofolate dehydrogenase/cyclohydrolase family. As to quaternary structure, homodimer.

The enzyme catalyses (6R)-5,10-methylene-5,6,7,8-tetrahydrofolate + NADP(+) = (6R)-5,10-methenyltetrahydrofolate + NADPH. It carries out the reaction (6R)-5,10-methenyltetrahydrofolate + H2O = (6R)-10-formyltetrahydrofolate + H(+). It functions in the pathway one-carbon metabolism; tetrahydrofolate interconversion. In terms of biological role, catalyzes the oxidation of 5,10-methylenetetrahydrofolate to 5,10-methenyltetrahydrofolate and then the hydrolysis of 5,10-methenyltetrahydrofolate to 10-formyltetrahydrofolate. The polypeptide is Bifunctional protein FolD (Hydrogenobaculum sp. (strain Y04AAS1)).